The chain runs to 279 residues: Phosphatidylglycerol--prolipoprotein diacylglyceryl transferase (279 aa).

Transmembrane regions (helical) follow at residues 22 to 42 (WYGI…QAAL), 52 to 72 (LIDI…IYFV), and 89 to 109 (IWHG…SGII). Residue Arg-137 participates in a 1,2-diacyl-sn-glycero-3-phospho-(1'-sn-glycerol) binding. 2 helical membrane passes run 203 to 223 (LGET…FVEA) and 235 to 255 (IRVA…FVIY).

This sequence belongs to the Lgt family.

It localises to the cell membrane. The catalysed reaction is L-cysteinyl-[prolipoprotein] + a 1,2-diacyl-sn-glycero-3-phospho-(1'-sn-glycerol) = an S-1,2-diacyl-sn-glyceryl-L-cysteinyl-[prolipoprotein] + sn-glycerol 1-phosphate + H(+). It participates in protein modification; lipoprotein biosynthesis (diacylglyceryl transfer). Functionally, catalyzes the transfer of the diacylglyceryl group from phosphatidylglycerol to the sulfhydryl group of the N-terminal cysteine of a prolipoprotein, the first step in the formation of mature lipoproteins. In Staphylococcus epidermidis (strain ATCC 12228 / FDA PCI 1200), this protein is Phosphatidylglycerol--prolipoprotein diacylglyceryl transferase.